We begin with the raw amino-acid sequence, 483 residues long: Glutamate--tRNA ligase (483 aa).

The short motif at 11-21 is the 'HIGH' region element; that stretch reads PSPTGLLHIGN. A 'KMSKS' region motif is present at residues 255–259; that stretch reads KLSKR. Residue lysine 258 coordinates ATP.

It belongs to the class-I aminoacyl-tRNA synthetase family. Glutamate--tRNA ligase type 1 subfamily. As to quaternary structure, monomer.

Its subcellular location is the cytoplasm. It carries out the reaction tRNA(Glu) + L-glutamate + ATP = L-glutamyl-tRNA(Glu) + AMP + diphosphate. In terms of biological role, catalyzes the attachment of glutamate to tRNA(Glu) in a two-step reaction: glutamate is first activated by ATP to form Glu-AMP and then transferred to the acceptor end of tRNA(Glu). In Lactococcus lactis subsp. cremoris (strain SK11), this protein is Glutamate--tRNA ligase.